The sequence spans 459 residues: MEEGDFSGSSVRSEVTDGRNTTTTTETRTTSELQPKPLVLRLLEVQNGDEAEAVGEEGQEEDYEGSKTHKSHEVSASFRSHNSSDPPQSRKASDSLRSRKGIEPLEPRKTSDSFRSLMGSDPLQSSERQEDGKDDLFPNAVIMTSPSLIARYLPRLQLASLRAHPVTRDLVKKCFYSRKRVQDLSKPKKQWGTPDRRLFWGNQDPIRPVSEAALKAKLSKRIEDLAQPRLVSRHYVPNRIQYYYSCGRESVIWEISPPALVTRPSKRIQKLAKPNKFKAQSLIKRETVPGTTRYSDPSPRILRLSIAKGTNPSYLPPKTLETKISFSTLSAVATPRIVDLAHPRIKIEGLCYERERSELPIRPVAPAALLANPSKRTIFLAKSKRVHEDYLPIRDARWPVSYAATHSQVSERVQELANPHTRGPANLVYYDPNVFKVKPSALKAHCSDRVKELAEPIVR.

Positions 1–138 (MEEGDFSGSS…QEDGKDDLFP (138 aa)) are disordered. Residues 21–30 (TTTTTETRTT) show a composition bias toward low complexity. Residues 47-63 (NGDEAEAVGEEGQEEDY) are compositionally biased toward acidic residues. Residues 64–73 (EGSKTHKSHE) are compositionally biased toward basic and acidic residues. Residues 77 to 87 (SFRSHNSSDPP) are compositionally biased toward polar residues. Composition is skewed to basic and acidic residues over residues 91-112 (KASD…KTSD) and 127-136 (ERQEDGKDDL). 8 THEG repeats span residues 172-190 (KKCF…PKKQ), 212-231 (AALK…PRLV), 258-277 (PALV…PNKF), 291-310 (TTRY…AKGT), 327-346 (STLS…PRIK), 367-386 (AALL…SKRV), 403-422 (AATH…PHTR), and 440-459 (SALK…PIVR).

The polypeptide is Sperm microtubule associated protein 2-like (Mus musculus (Mouse)).